Here is a 318-residue protein sequence, read N- to C-terminus: Thymidylate synthase (318 aa).

Residues arginine 25 and 180 to 181 (RR) contribute to the dUMP site. Catalysis depends on cysteine 200, which acts as the Nucleophile. Residues 220-223 (RSGD), asparagine 231, and 261-263 (HIY) contribute to the dUMP site. Position 223 (aspartate 223) interacts with (6R)-5,10-methylene-5,6,7,8-tetrahydrofolate. Alanine 317 is a binding site for (6R)-5,10-methylene-5,6,7,8-tetrahydrofolate.

It belongs to the thymidylate synthase family. Bacterial-type ThyA subfamily. Homodimer.

The protein localises to the cytoplasm. The catalysed reaction is dUMP + (6R)-5,10-methylene-5,6,7,8-tetrahydrofolate = 7,8-dihydrofolate + dTMP. It functions in the pathway pyrimidine metabolism; dTTP biosynthesis. Catalyzes the reductive methylation of 2'-deoxyuridine-5'-monophosphate (dUMP) to 2'-deoxythymidine-5'-monophosphate (dTMP) while utilizing 5,10-methylenetetrahydrofolate (mTHF) as the methyl donor and reductant in the reaction, yielding dihydrofolate (DHF) as a by-product. This enzymatic reaction provides an intracellular de novo source of dTMP, an essential precursor for DNA biosynthesis. This Bacillus thuringiensis subsp. konkukian (strain 97-27) protein is Thymidylate synthase.